The sequence spans 416 residues: MANSWDQLGEIASVAQLTGIDALKLIGMIVNAANTARMHKKNCRQFAHHLKLIRNLLEQIKNSEMNQRSEILEPLQGLDDALRRSYILVKSCQEKSYLYLLAMGWNIVNQFEKAQNEIDLFLKIVPLINMADNARIRERLEAIERDQREYTLDEEDRKVQDVILKQESTREAATSVLKKTLSRSYPNMGFCEALKTEEEKLQLELQRSRARYDADQCEVIQRLIDVTQTAATVEPNLEKVLTKKEELTSSKKRDDLYDTDSSSIRADSRSTSYVSSGHELLSGRSLQHRGNWHADLLDCCSEPCLCLKTLFFPCGTLAKISTVATSRQISSTEVCKNLIVYSLILSCCCYTCCIRKKLRKTLNITGGCIDDFLSHLMCCCCALVQELREVEIHRASYGTEKSNKEMSPPTPQFMEE.

Positions 191 to 219 (CEALKTEEEKLQLELQRSRARYDADQCEV) form a coiled coil. Residues 338 to 354 (LIVYSLILSCCCYTCCI) form a helical membrane-spanning segment.

As to expression, expressed in roots, leaves, stems, flowers and siliques. In the root, high levels of expression in vascular tissues, in the stele and endodermis, but no expression in the cortex, epidermis, root cap, promeristem and adjacent elongation zone of the primary root. Not expressed in root hairs. Detected in shoot apical meristem, leaf mesophyll cells and vascular tissues, upper half of inflorescence, but not in petioles of rosette leaves.

It localises to the cell membrane. With respect to regulation, inhibited by GdCl(3), but not by verapamil. Functionally, calcium-permeable stretch-activated channel component. Probably involved in mechanosensing and in mechano-stimulated calcium uptake mechanism. The sequence is that of Protein MID1-COMPLEMENTING ACTIVITY 2 (MCA2) from Arabidopsis thaliana (Mouse-ear cress).